Reading from the N-terminus, the 200-residue chain is Dephospho-CoA kinase (200 aa).

Residues 3–200 form the DPCK domain; that stretch reads KVGLTGGIGS…EELQRRLHSR (198 aa). 11–16 serves as a coordination point for ATP; sequence GSGKSS.

Belongs to the CoaE family.

The protein localises to the cytoplasm. The catalysed reaction is 3'-dephospho-CoA + ATP = ADP + CoA + H(+). Its pathway is cofactor biosynthesis; coenzyme A biosynthesis; CoA from (R)-pantothenate: step 5/5. In terms of biological role, catalyzes the phosphorylation of the 3'-hydroxyl group of dephosphocoenzyme A to form coenzyme A. This chain is Dephospho-CoA kinase, found in Thermobifida fusca (strain YX).